The primary structure comprises 499 residues: Bifunctional purine biosynthesis protein PurH (499 aa).

One can recognise an MGS-like domain in the interval Met1 to Thr144.

The protein belongs to the PurH family.

The catalysed reaction is (6R)-10-formyltetrahydrofolate + 5-amino-1-(5-phospho-beta-D-ribosyl)imidazole-4-carboxamide = 5-formamido-1-(5-phospho-D-ribosyl)imidazole-4-carboxamide + (6S)-5,6,7,8-tetrahydrofolate. It carries out the reaction IMP + H2O = 5-formamido-1-(5-phospho-D-ribosyl)imidazole-4-carboxamide. It participates in purine metabolism; IMP biosynthesis via de novo pathway; 5-formamido-1-(5-phospho-D-ribosyl)imidazole-4-carboxamide from 5-amino-1-(5-phospho-D-ribosyl)imidazole-4-carboxamide (10-formyl THF route): step 1/1. Its pathway is purine metabolism; IMP biosynthesis via de novo pathway; IMP from 5-formamido-1-(5-phospho-D-ribosyl)imidazole-4-carboxamide: step 1/1. The sequence is that of Bifunctional purine biosynthesis protein PurH from Clostridium botulinum (strain Loch Maree / Type A3).